The following is a 370-amino-acid chain: Mitochondrial carrier protein SCaMC-3L (370 aa).

Solcar repeat units follow at residues 90 to 176 (EALW…CKNY), 184 to 269 (PPFQ…LQCF), and 280 to 367 (PSGL…MKKT). 6 helical membrane passes run 96–113 (LLSGAMAGAVSRTGTAPL), 151–170 (GNGINVLKIAPEYAIKFSVF), 194–207 (SLAVAISQTLINPM), 245–263 (YLPNMLGIIPYACTDLAVY), 282–306 (GLVSLSSVTLSTTCGQMASYPLTLV), and 342–361 (GMTPTLLKVLPAGGISYVVY).

Belongs to the mitochondrial carrier (TC 2.A.29) family.

It is found in the mitochondrion inner membrane. It catalyses the reaction Mg(2+)(out) + phosphate(in) + ATP(out) = Mg(2+)(in) + phosphate(out) + ATP(in). It carries out the reaction ADP(out) + phosphate(in) + H(+)(out) = ADP(in) + phosphate(out) + H(+)(in). In terms of biological role, calcium-independent ATP-Mg/Pi exchanger that catalyzes the electroneutral exchange of Mg-ATP or free ADP against an hydrogenphosphate and participates in the net transport of adenine nucleotides across the mitochondria inner membrane. The chain is Mitochondrial carrier protein SCaMC-3L from Homo sapiens (Human).